The primary structure comprises 457 residues: 3-isopropylmalate dehydratase large subunit (457 aa).

Residues Cys337, Cys397, and Cys400 each contribute to the [4Fe-4S] cluster site.

The protein belongs to the aconitase/IPM isomerase family. LeuC type 1 subfamily. In terms of assembly, heterodimer of LeuC and LeuD. It depends on [4Fe-4S] cluster as a cofactor.

The enzyme catalyses (2R,3S)-3-isopropylmalate = (2S)-2-isopropylmalate. It participates in amino-acid biosynthesis; L-leucine biosynthesis; L-leucine from 3-methyl-2-oxobutanoate: step 2/4. Its function is as follows. Catalyzes the isomerization between 2-isopropylmalate and 3-isopropylmalate, via the formation of 2-isopropylmaleate. This is 3-isopropylmalate dehydratase large subunit from Oenococcus oeni (strain ATCC BAA-331 / PSU-1).